We begin with the raw amino-acid sequence, 131 residues long: Transcription antitermination protein NusB (131 aa).

Belongs to the NusB family.

Involved in transcription antitermination. Required for transcription of ribosomal RNA (rRNA) genes. Binds specifically to the boxA antiterminator sequence of the ribosomal RNA (rrn) operons. The protein is Transcription antitermination protein NusB of Aliarcobacter butzleri (strain RM4018) (Arcobacter butzleri).